Consider the following 336-residue polypeptide: Protein-glutamate methylesterase/protein-glutamine glutaminase 3 (336 aa).

Residues 2–119 (KIAIVNDMPM…PNPKEAAAPL (118 aa)) form the Response regulatory domain. Position 53 is a 4-aspartylphosphate (aspartate 53). Residues 147–336 (PARRDRLVAI…APRLVEVFTQ (190 aa)) form the CheB-type methylesterase domain. Residues serine 159, histidine 186, and aspartate 279 contribute to the active site.

It belongs to the CheB family. Phosphorylated by CheA. Phosphorylation of the N-terminal regulatory domain activates the methylesterase activity.

The protein resides in the cytoplasm. It carries out the reaction [protein]-L-glutamate 5-O-methyl ester + H2O = L-glutamyl-[protein] + methanol + H(+). The catalysed reaction is L-glutaminyl-[protein] + H2O = L-glutamyl-[protein] + NH4(+). Involved in chemotaxis. Part of a chemotaxis signal transduction system that modulates chemotaxis in response to various stimuli. Catalyzes the demethylation of specific methylglutamate residues introduced into the chemoreceptors (methyl-accepting chemotaxis proteins or MCP) by CheR. Also mediates the irreversible deamidation of specific glutamine residues to glutamic acid. The polypeptide is Protein-glutamate methylesterase/protein-glutamine glutaminase 3 (Pseudomonas savastanoi pv. phaseolicola (strain 1448A / Race 6) (Pseudomonas syringae pv. phaseolicola (strain 1448A / Race 6))).